The sequence spans 240 residues: Biosynthetic peptidoglycan transglycosylase (240 aa).

The chain crosses the membrane as a helical span at residues 27–47 (VVLLFFFAVFALLLIFRFVPI).

It belongs to the glycosyltransferase 51 family.

The protein resides in the cell inner membrane. The catalysed reaction is [GlcNAc-(1-&gt;4)-Mur2Ac(oyl-L-Ala-gamma-D-Glu-L-Lys-D-Ala-D-Ala)](n)-di-trans,octa-cis-undecaprenyl diphosphate + beta-D-GlcNAc-(1-&gt;4)-Mur2Ac(oyl-L-Ala-gamma-D-Glu-L-Lys-D-Ala-D-Ala)-di-trans,octa-cis-undecaprenyl diphosphate = [GlcNAc-(1-&gt;4)-Mur2Ac(oyl-L-Ala-gamma-D-Glu-L-Lys-D-Ala-D-Ala)](n+1)-di-trans,octa-cis-undecaprenyl diphosphate + di-trans,octa-cis-undecaprenyl diphosphate + H(+). Its pathway is cell wall biogenesis; peptidoglycan biosynthesis. Its function is as follows. Peptidoglycan polymerase that catalyzes glycan chain elongation from lipid-linked precursors. The chain is Biosynthetic peptidoglycan transglycosylase from Haemophilus influenzae (strain PittEE).